The sequence spans 331 residues: Ketol-acid reductoisomerase (NADP(+)) (331 aa).

Positions 2-182 (AKMYYDSDCN…GAGRAGILET (181 aa)) constitute a KARI N-terminal Rossmann domain. NADP(+) is bound by residues 25–28 (YGSQ), S51, and 83–86 (DEKQ). Residue H108 is part of the active site. G134 is an NADP(+) binding site. The KARI C-terminal knotted domain occupies 183 to 329 (TFREETETDL…AELRKMMSWL (147 aa)). Residues D191, E195, E227, and E231 each contribute to the Mg(2+) site. Substrate is bound at residue S252.

This sequence belongs to the ketol-acid reductoisomerase family. It depends on Mg(2+) as a cofactor.

It carries out the reaction (2R)-2,3-dihydroxy-3-methylbutanoate + NADP(+) = (2S)-2-acetolactate + NADPH + H(+). The catalysed reaction is (2R,3R)-2,3-dihydroxy-3-methylpentanoate + NADP(+) = (S)-2-ethyl-2-hydroxy-3-oxobutanoate + NADPH + H(+). The protein operates within amino-acid biosynthesis; L-isoleucine biosynthesis; L-isoleucine from 2-oxobutanoate: step 2/4. It participates in amino-acid biosynthesis; L-valine biosynthesis; L-valine from pyruvate: step 2/4. Its function is as follows. Involved in the biosynthesis of branched-chain amino acids (BCAA). Catalyzes an alkyl-migration followed by a ketol-acid reduction of (S)-2-acetolactate (S2AL) to yield (R)-2,3-dihydroxy-isovalerate. In the isomerase reaction, S2AL is rearranged via a Mg-dependent methyl migration to produce 3-hydroxy-3-methyl-2-ketobutyrate (HMKB). In the reductase reaction, this 2-ketoacid undergoes a metal-dependent reduction by NADPH to yield (R)-2,3-dihydroxy-isovalerate. In Ruminiclostridium cellulolyticum (strain ATCC 35319 / DSM 5812 / JCM 6584 / H10) (Clostridium cellulolyticum), this protein is Ketol-acid reductoisomerase (NADP(+)).